A 200-amino-acid chain; its full sequence is Holliday junction resolvase RecU (200 aa).

Positions 1–24 are disordered; that stretch reads MTIRYPNGKRYDQASQPHKTPIKK. Mg(2+) contacts are provided by threonine 85, aspartate 87, glutamate 100, and glutamine 119.

The protein belongs to the RecU family. The cofactor is Mg(2+).

Its subcellular location is the cytoplasm. The enzyme catalyses Endonucleolytic cleavage at a junction such as a reciprocal single-stranded crossover between two homologous DNA duplexes (Holliday junction).. In terms of biological role, endonuclease that resolves Holliday junction intermediates in genetic recombination. Cleaves mobile four-strand junctions by introducing symmetrical nicks in paired strands. Promotes annealing of linear ssDNA with homologous dsDNA. Required for DNA repair, homologous recombination and chromosome segregation. The protein is Holliday junction resolvase RecU of Bacillus mycoides (strain KBAB4) (Bacillus weihenstephanensis).